The sequence spans 185 residues: Adenine phosphoribosyltransferase (185 aa).

Belongs to the purine/pyrimidine phosphoribosyltransferase family. Homodimer.

It is found in the cytoplasm. It carries out the reaction AMP + diphosphate = 5-phospho-alpha-D-ribose 1-diphosphate + adenine. It participates in purine metabolism; AMP biosynthesis via salvage pathway; AMP from adenine: step 1/1. In terms of biological role, catalyzes a salvage reaction resulting in the formation of AMP, that is energically less costly than de novo synthesis. The chain is Adenine phosphoribosyltransferase from Shewanella denitrificans (strain OS217 / ATCC BAA-1090 / DSM 15013).